The primary structure comprises 313 residues: Glycine--tRNA ligase alpha subunit (313 aa).

The protein belongs to the class-II aminoacyl-tRNA synthetase family. Tetramer of two alpha and two beta subunits.

It localises to the cytoplasm. It catalyses the reaction tRNA(Gly) + glycine + ATP = glycyl-tRNA(Gly) + AMP + diphosphate. The chain is Glycine--tRNA ligase alpha subunit from Leuconostoc mesenteroides subsp. mesenteroides (strain ATCC 8293 / DSM 20343 / BCRC 11652 / CCM 1803 / JCM 6124 / NCDO 523 / NBRC 100496 / NCIMB 8023 / NCTC 12954 / NRRL B-1118 / 37Y).